The sequence spans 96 residues: UPF0235 protein YggU (96 aa).

The protein belongs to the UPF0235 family.

This is UPF0235 protein YggU from Salmonella agona (strain SL483).